A 150-amino-acid polypeptide reads, in one-letter code: 16.9 kDa class I heat shock protein 1 (150 aa).

The important for thermostability under elevated temperature stretch occupies residues 1 to 42; the sequence is MSLVRRSNVFDPFSLDLWDPFDSVFRSVVPATSDNDTAAFAN. The sHSP domain maps to 36 to 150; it reads DTAAFANARI…PEVKAIEISG (115 aa).

Belongs to the small heat shock protein (HSP20) family. As to quaternary structure, forms oligomeric structures.

The protein localises to the cytoplasm. The protein is 16.9 kDa class I heat shock protein 1 (HSP16.9A) of Oryza sativa subsp. japonica (Rice).